The sequence spans 207 residues: Protein GET1 (207 aa).

Over 1–4 the chain is Lumenal; sequence MPSL. Residues 5–24 traverse the membrane as a helical segment; it reads LISVLFLHIAIYIINTIAAS. At 25-110 the chain is on the cytoplasmic side; that stretch reads TIDSLLWLIY…FFDVAVKALR (86 aa). A coiled-coil region spans residues 44–97; the sequence is IAREQHQMKLEVVQLKREMNATSSQDEFAKWAKLRRRHDKALEEYEVKNKQFSR. Residues 111 to 131 traverse the membrane as a helical segment; it reads WAGTSGLIVFLQFWFSKTPIF. The Lumenal portion of the chain corresponds to 132–155; that stretch reads TLPPSWIPWQVEWVLSFPRAPMGT. A helical membrane pass occupies residues 156–172; sequence VSIQVWGGACAVVVALI. Topologically, residues 173-207 are cytoplasmic; it reads GEAIGATVRYLYASKDSMEAIKVGAGAVEKEKKRQ.

This sequence belongs to the WRB/GET1 family. Interacts with GET3.

The protein localises to the endoplasmic reticulum membrane. Required for the post-translational delivery of tail-anchored (TA) proteins to the endoplasmic reticulum. Acts as a membrane receptor for soluble GET3, which recognizes and selectively binds the transmembrane domain of TA proteins in the cytosol. The chain is Protein GET1 from Paracoccidioides brasiliensis (strain Pb18).